The following is a 382-amino-acid chain: 1-deoxy-D-xylulose 5-phosphate reductoisomerase (382 aa).

6 residues coordinate NADPH: T10, G11, S12, I13, G36, and N122. K123 contributes to the 1-deoxy-D-xylulose 5-phosphate binding site. E124 is a binding site for NADPH. D148 is a binding site for Mn(2+). S149, E150, S174, and H197 together coordinate 1-deoxy-D-xylulose 5-phosphate. E150 contacts Mn(2+). Position 203 (G203) interacts with NADPH. Residues S210, N215, K216, and E219 each contribute to the 1-deoxy-D-xylulose 5-phosphate site. Residue E219 participates in Mn(2+) binding.

Belongs to the DXR family. It depends on Mg(2+) as a cofactor. The cofactor is Mn(2+).

It carries out the reaction 2-C-methyl-D-erythritol 4-phosphate + NADP(+) = 1-deoxy-D-xylulose 5-phosphate + NADPH + H(+). It participates in isoprenoid biosynthesis; isopentenyl diphosphate biosynthesis via DXP pathway; isopentenyl diphosphate from 1-deoxy-D-xylulose 5-phosphate: step 1/6. Catalyzes the NADPH-dependent rearrangement and reduction of 1-deoxy-D-xylulose-5-phosphate (DXP) to 2-C-methyl-D-erythritol 4-phosphate (MEP). The chain is 1-deoxy-D-xylulose 5-phosphate reductoisomerase from Chlorobium phaeobacteroides (strain BS1).